Reading from the N-terminus, the 548-residue chain is Chaperonin GroEL (548 aa).

ATP is bound by residues 30–33 (TLGP), K51, 87–91 (DGTTT), G415, and D495.

The protein belongs to the chaperonin (HSP60) family. As to quaternary structure, forms a cylinder of 14 subunits composed of two heptameric rings stacked back-to-back. Interacts with the co-chaperonin GroES.

The protein resides in the cytoplasm. The enzyme catalyses ATP + H2O + a folded polypeptide = ADP + phosphate + an unfolded polypeptide.. Its function is as follows. Together with its co-chaperonin GroES, plays an essential role in assisting protein folding. The GroEL-GroES system forms a nano-cage that allows encapsulation of the non-native substrate proteins and provides a physical environment optimized to promote and accelerate protein folding. This is Chaperonin GroEL from Erwinia tasmaniensis (strain DSM 17950 / CFBP 7177 / CIP 109463 / NCPPB 4357 / Et1/99).